We begin with the raw amino-acid sequence, 372 residues long: Anhydro-N-acetylmuramic acid kinase (372 aa).

Gly13–Asp20 provides a ligand contact to ATP.

Belongs to the anhydro-N-acetylmuramic acid kinase family.

The enzyme catalyses 1,6-anhydro-N-acetyl-beta-muramate + ATP + H2O = N-acetyl-D-muramate 6-phosphate + ADP + H(+). Its pathway is amino-sugar metabolism; 1,6-anhydro-N-acetylmuramate degradation. It participates in cell wall biogenesis; peptidoglycan recycling. Catalyzes the specific phosphorylation of 1,6-anhydro-N-acetylmuramic acid (anhMurNAc) with the simultaneous cleavage of the 1,6-anhydro ring, generating MurNAc-6-P. Is required for the utilization of anhMurNAc either imported from the medium or derived from its own cell wall murein, and thus plays a role in cell wall recycling. The sequence is that of Anhydro-N-acetylmuramic acid kinase from Rhizobium johnstonii (strain DSM 114642 / LMG 32736 / 3841) (Rhizobium leguminosarum bv. viciae).